Consider the following 954-residue polypeptide: Glycine dehydrogenase (decarboxylating) (954 aa).

K704 is modified (N6-(pyridoxal phosphate)lysine).

This sequence belongs to the GcvP family. In terms of assembly, the glycine cleavage system is composed of four proteins: P, T, L and H. Pyridoxal 5'-phosphate serves as cofactor.

It catalyses the reaction N(6)-[(R)-lipoyl]-L-lysyl-[glycine-cleavage complex H protein] + glycine + H(+) = N(6)-[(R)-S(8)-aminomethyldihydrolipoyl]-L-lysyl-[glycine-cleavage complex H protein] + CO2. The glycine cleavage system catalyzes the degradation of glycine. The P protein binds the alpha-amino group of glycine through its pyridoxal phosphate cofactor; CO(2) is released and the remaining methylamine moiety is then transferred to the lipoamide cofactor of the H protein. The protein is Glycine dehydrogenase (decarboxylating) of Vibrio vulnificus (strain CMCP6).